The primary structure comprises 139 residues: ATP synthase epsilon chain (139 aa).

A disordered region spans residues 89–110 (EARAEQARAEAEARRREAQSEH).

Belongs to the ATPase epsilon chain family. F-type ATPases have 2 components, CF(1) - the catalytic core - and CF(0) - the membrane proton channel. CF(1) has five subunits: alpha(3), beta(3), gamma(1), delta(1), epsilon(1). CF(0) has three main subunits: a, b and c.

Its subcellular location is the cell membrane. Produces ATP from ADP in the presence of a proton gradient across the membrane. This chain is ATP synthase epsilon chain, found in Chloroflexus aggregans (strain MD-66 / DSM 9485).